We begin with the raw amino-acid sequence, 325 residues long: MNALTAVKTNADSVTRSDAGFTFAPSVQSPRLLELTFSAKTTAQFLQQVEQWPVQALEYKSFLRFKVGQILDALCGNQLQPLLIKTLLDRAEGALLINAEGIDNVEQADEMVKLATAVAHLIGRSNYDAMSGQYYARFVVKNVDNSDSYLRQPHRVMELHNDGTYVEEVTDYVLMMKIDEQNMAGGNSLLLHLDDWEHLERFFSHPLARRSMRFAAPPSKNVSHDVYHPVFDVDQQGRPVMRYIDQFVQPKDFEEGVWLSDLSDALETSKNILSVPVPVGKFLLINNLFWLHGRDRFTPHPDLRRELMRQRGYFAYSTRCYQTHQ.

Fe cation is bound by residues His-160, Asp-162, and His-292.

Belongs to the glutarate hydroxylase family. As to quaternary structure, homotetramer. Fe(2+) is required as a cofactor.

It carries out the reaction glutarate + 2-oxoglutarate + O2 = (S)-2-hydroxyglutarate + succinate + CO2. It functions in the pathway amino-acid degradation. In terms of biological role, acts as an alpha-ketoglutarate-dependent dioxygenase catalyzing hydroxylation of glutarate (GA) to L-2-hydroxyglutarate (L2HG). Functions in a L-lysine degradation pathway that proceeds via cadaverine, glutarate and L-2-hydroxyglutarate. This chain is Glutarate 2-hydroxylase, found in Citrobacter koseri (strain ATCC BAA-895 / CDC 4225-83 / SGSC4696).